The primary structure comprises 179 residues: Large ribosomal subunit protein bL17 (179 aa).

The interval threonine 127–arginine 179 is disordered. Residues alanine 154–proline 168 are compositionally biased toward low complexity. Residues glutamate 170–arginine 179 show a composition bias toward polar residues.

Belongs to the bacterial ribosomal protein bL17 family. As to quaternary structure, part of the 50S ribosomal subunit. Contacts protein L32.

In Tropheryma whipplei (strain TW08/27) (Whipple's bacillus), this protein is Large ribosomal subunit protein bL17.